Consider the following 882-residue polypeptide: Ion channel DMI1 (882 aa).

The disordered stretch occupies residues 1–122; that stretch reads MAKSNEESSN…PSSSSITKQQ (122 aa). Positions 48–62 are enriched in polar residues; the sequence is TSTTKTDFSEQQWNY. Residues 78 to 95 show a composition bias toward pro residues; sequence PPPPPSKPPVNLIPPHPR. Positions 107 to 117 are enriched in low complexity; sequence SSLLPQPSSSS. Transmembrane regions (helical) follow at residues 129-149, 192-212, 255-275, and 307-327; these read SPIF…SAYL, TIAL…YKYL, LALL…LYAV, and IVSV…LGLV. RCK N-terminal domains are found at residues 348–489 and 608–757; these read RNHV…ETVV and PEKI…DKSI. A coiled-coil region spans residues 378–403; it reads VIVVLAEKEKEEMEMDIAKLEFDFMG.

Belongs to the castor/pollux (TC 1.A.1.23) family. Interacts (via c-terminus) with CNGC15A, CNGC15B and CNGC15C (via N-terminus). The Nod factor has no effect on these interactions, implying that the complex is maintained after activation. Mainly expressed in roots and nodules. Also detected in pods, flowers, leaves, and stems.

It is found in the nucleus membrane. Required for early signal transduction events leading to endosymbiosis. Acts early in a signal transduction chain leading from the perception of Nod factor to the activation of calcium spiking. Also involved in mycorrhizal symbiosis. May be involved in the regulation of the calcium channel responsible for calcium spiking by mobilizing another cation, and thereby altering the membrane potential. In Medicago truncatula (Barrel medic), this protein is Ion channel DMI1.